We begin with the raw amino-acid sequence, 233 residues long: Large ribosomal subunit protein uL2 (233 aa).

Positions 195-233 are disordered; the sequence is PHGGGNHQHVGRPSTVGRNAPPGRKVGRLSPKRRRVNGR. The span at 219-233 shows a compositional bias: basic residues; it reads KVGRLSPKRRRVNGR.

The protein belongs to the universal ribosomal protein uL2 family. As to quaternary structure, part of the 50S ribosomal subunit. Forms a bridge to the 30S subunit in the 70S ribosome.

Functionally, one of the primary rRNA binding proteins. Required for association of the 30S and 50S subunits to form the 70S ribosome, for tRNA binding and peptide bond formation. It has been suggested to have peptidyltransferase activity; this is somewhat controversial. Makes several contacts with the 16S rRNA in the 70S ribosome. The polypeptide is Large ribosomal subunit protein uL2 (Thermoplasma acidophilum (strain ATCC 25905 / DSM 1728 / JCM 9062 / NBRC 15155 / AMRC-C165)).